A 616-amino-acid polypeptide reads, in one-letter code: Dihydroxy-acid dehydratase (616 aa).

Asp81 contacts Mg(2+). Cys122 provides a ligand contact to [2Fe-2S] cluster. The Mg(2+) site is built by Asp123 and Lys124. Lys124 is modified (N6-carboxylysine). Position 197 (Cys197) interacts with [2Fe-2S] cluster. A Mg(2+)-binding site is contributed by Glu493. Ser519 functions as the Proton acceptor in the catalytic mechanism.

Belongs to the IlvD/Edd family. Homodimer. The cofactor is [2Fe-2S] cluster. Requires Mg(2+) as cofactor.

It carries out the reaction (2R)-2,3-dihydroxy-3-methylbutanoate = 3-methyl-2-oxobutanoate + H2O. It catalyses the reaction (2R,3R)-2,3-dihydroxy-3-methylpentanoate = (S)-3-methyl-2-oxopentanoate + H2O. The protein operates within amino-acid biosynthesis; L-isoleucine biosynthesis; L-isoleucine from 2-oxobutanoate: step 3/4. It participates in amino-acid biosynthesis; L-valine biosynthesis; L-valine from pyruvate: step 3/4. Its function is as follows. Functions in the biosynthesis of branched-chain amino acids. Catalyzes the dehydration of (2R,3R)-2,3-dihydroxy-3-methylpentanoate (2,3-dihydroxy-3-methylvalerate) into 2-oxo-3-methylpentanoate (2-oxo-3-methylvalerate) and of (2R)-2,3-dihydroxy-3-methylbutanoate (2,3-dihydroxyisovalerate) into 2-oxo-3-methylbutanoate (2-oxoisovalerate), the penultimate precursor to L-isoleucine and L-valine, respectively. The protein is Dihydroxy-acid dehydratase of Corynebacterium kroppenstedtii (strain DSM 44385 / JCM 11950 / CIP 105744 / CCUG 35717).